The chain runs to 351 residues: Anthranilate phosphoribosyltransferase (351 aa).

5-phospho-alpha-D-ribose 1-diphosphate contacts are provided by residues Gly-80, 83–84 (GD), Thr-88, 90–93 (NIST), 108–116 (KHGNRSITS), and Ser-120. An anthranilate-binding site is contributed by Gly-80. Residue Ser-92 participates in Mg(2+) binding. Asn-111 is an anthranilate binding site. An anthranilate-binding site is contributed by Arg-166. Asp-229 and Glu-230 together coordinate Mg(2+).

This sequence belongs to the anthranilate phosphoribosyltransferase family. As to quaternary structure, homodimer. It depends on Mg(2+) as a cofactor.

It catalyses the reaction N-(5-phospho-beta-D-ribosyl)anthranilate + diphosphate = 5-phospho-alpha-D-ribose 1-diphosphate + anthranilate. The protein operates within amino-acid biosynthesis; L-tryptophan biosynthesis; L-tryptophan from chorismate: step 2/5. In terms of biological role, catalyzes the transfer of the phosphoribosyl group of 5-phosphorylribose-1-pyrophosphate (PRPP) to anthranilate to yield N-(5'-phosphoribosyl)-anthranilate (PRA). In Chlorobaculum parvum (strain DSM 263 / NCIMB 8327) (Chlorobium vibrioforme subsp. thiosulfatophilum), this protein is Anthranilate phosphoribosyltransferase.